We begin with the raw amino-acid sequence, 187 residues long: Intraflagellar transport protein 22 homolog (187 aa).

GTP is bound by residues 10 to 17, 65 to 69, and 125 to 128; these read GPSECGKT, DCAGD, and HKPG.

It belongs to the small GTPase superfamily. Rab family.

This chain is Intraflagellar transport protein 22 homolog (ift22), found in Danio rerio (Zebrafish).